Reading from the N-terminus, the 223-residue chain is 7-cyano-7-deazaguanine synthase (223 aa).

Residue 10–20 (FSGGQDSTTCL) participates in ATP binding. Cysteine 188, cysteine 197, cysteine 200, and cysteine 203 together coordinate Zn(2+).

Belongs to the QueC family. Zn(2+) is required as a cofactor.

The enzyme catalyses 7-carboxy-7-deazaguanine + NH4(+) + ATP = 7-cyano-7-deazaguanine + ADP + phosphate + H2O + H(+). Its pathway is purine metabolism; 7-cyano-7-deazaguanine biosynthesis. Functionally, catalyzes the ATP-dependent conversion of 7-carboxy-7-deazaguanine (CDG) to 7-cyano-7-deazaguanine (preQ(0)). In Phocaeicola vulgatus (strain ATCC 8482 / DSM 1447 / JCM 5826 / CCUG 4940 / NBRC 14291 / NCTC 11154) (Bacteroides vulgatus), this protein is 7-cyano-7-deazaguanine synthase.